The primary structure comprises 198 residues: Recombination protein RecR (198 aa).

A C4-type zinc finger spans residues 56-71 (CKVCGNFSEEDECVIC). Positions 79–174 (GVICVVEEPK…RVSKLASGLP (96 aa)) constitute a Toprim domain.

Belongs to the RecR family.

Its function is as follows. May play a role in DNA repair. It seems to be involved in an RecBC-independent recombinational process of DNA repair. It may act with RecF and RecO. The polypeptide is Recombination protein RecR (Tropheryma whipplei (strain Twist) (Whipple's bacillus)).